The sequence spans 193 residues: Rho-related protein racF2 (193 aa).

Residue 10-17 participates in GTP binding; it reads GDGAVGKT. An Effector region motif is present at residues 32–40; the sequence is YLPTVFDNY. GTP contacts are provided by residues 57 to 61 and 115 to 118; these read DTAGQ and TKQD. Cysteine methyl ester is present on Cys190. A lipid anchor (S-geranylgeranyl cysteine) is attached at Cys190. The propeptide at 191–193 is removed in mature form; it reads TIM.

The protein belongs to the small GTPase superfamily. Rho family.

Its subcellular location is the cell membrane. This Dictyostelium discoideum (Social amoeba) protein is Rho-related protein racF2 (racF2).